The sequence spans 106 residues: MSTESALSYAALILADAEVEITSEKLLALVTKANVEVEGIWADLFAKALEGKDLKEFFFNFSAAPAAAAAGGAAGGGAAAEEAAEEEKEEEAKEESDDDMGFGLFD.

The tract at residues 74–106 is disordered; sequence AGGGAAAEEAAEEEKEEEAKEESDDDMGFGLFD. Residues 82-100 are compositionally biased toward acidic residues; it reads EAAEEEKEEEAKEESDDDM.

It belongs to the eukaryotic ribosomal protein P1/P2 family. Component of the large ribosomal subunit (LSU). Mature ribosomes consist of a small (40S) and a large (60S) subunit. The 40S subunit contains about 32 different proteins and 1 molecule of RNA (18S). The 60S subunit contains 45 different proteins and 3 molecules of RNA (25S, 5.8S and 5S). The 5 acidic ribosomal P-proteins form the stalk structure of the 60S subunit. They are organized as a pentameric complex in which uL10/P0 interacts with 2 heterodimers, P1A-P2B and P1B-P2A. Post-translationally, phosphorylated.

Its subcellular location is the cytoplasm. Its function is as follows. Component of the ribosome, a large ribonucleoprotein complex responsible for the synthesis of proteins in the cell. The small ribosomal subunit (SSU) binds messenger RNAs (mRNAs) and translates the encoded message by selecting cognate aminoacyl-transfer RNA (tRNA) molecules. The large subunit (LSU) contains the ribosomal catalytic site termed the peptidyl transferase center (PTC), which catalyzes the formation of peptide bonds, thereby polymerizing the amino acids delivered by tRNAs into a polypeptide chain. The nascent polypeptides leave the ribosome through a tunnel in the LSU and interact with protein factors that function in enzymatic processing, targeting, and the membrane insertion of nascent chains at the exit of the ribosomal tunnel. This is Large ribosomal subunit protein P1A (RPP1A) from Candida albicans (strain SC5314 / ATCC MYA-2876) (Yeast).